We begin with the raw amino-acid sequence, 762 residues long: Cellulose synthase-like protein H2 (762 aa).

Positions 1–15 (MAVVAAAAATGSTTR) are enriched in low complexity. Positions 1 to 39 (MAVVAAAAATGSTTRSGGGGGEGTRSGRKKPPPPPLQER) are disordered. Transmembrane regions (helical) follow at residues 47–67 (AWAW…LLAL) and 81–101 (GVWR…ALNV). Catalysis depends on residues Asp-180 and Asp-470. Helical transmembrane passes span 541–561 (LAYL…CYGL), 582–602 (FSVP…EYMA), 619–639 (IISV…SLGL), 673–693 (LPVF…VTVG), 708–728 (APGI…FPFV), and 739–759 (GIPW…VTFC).

The protein belongs to the glycosyltransferase 2 family. Plant cellulose synthase-like H subfamily.

The protein localises to the golgi apparatus membrane. Thought to be a Golgi-localized beta-glycan synthase that polymerize the backbones of noncellulosic polysaccharides (hemicelluloses) of plant cell wall. This is Cellulose synthase-like protein H2 (CSLH2) from Oryza sativa subsp. japonica (Rice).